The chain runs to 337 residues: Ribosomal RNA small subunit methyltransferase H (337 aa).

S-adenosyl-L-methionine contacts are provided by residues G36–H38, D56, F82, D100, and Q107. Residues L315–Q337 form a disordered region.

This sequence belongs to the methyltransferase superfamily. RsmH family.

Its subcellular location is the cytoplasm. The enzyme catalyses cytidine(1402) in 16S rRNA + S-adenosyl-L-methionine = N(4)-methylcytidine(1402) in 16S rRNA + S-adenosyl-L-homocysteine + H(+). In terms of biological role, specifically methylates the N4 position of cytidine in position 1402 (C1402) of 16S rRNA. The sequence is that of Ribosomal RNA small subunit methyltransferase H from Xanthomonas euvesicatoria pv. vesicatoria (strain 85-10) (Xanthomonas campestris pv. vesicatoria).